The chain runs to 493 residues: Xylulose kinase (493 aa).

84-85 (QH) lines the substrate pocket. Residue Asp-247 is the Proton acceptor of the active site.

Belongs to the FGGY kinase family.

The catalysed reaction is D-xylulose + ATP = D-xylulose 5-phosphate + ADP + H(+). Its function is as follows. Catalyzes the phosphorylation of D-xylulose to D-xylulose 5-phosphate. This is Xylulose kinase from Haemophilus influenzae (strain ATCC 51907 / DSM 11121 / KW20 / Rd).